Here is a 225-residue protein sequence, read N- to C-terminus: 3-dehydroquinate dehydratase (225 aa).

3-dehydroquinate-binding positions include Ser-6, 30 to 32 (EWR), and Arg-62. The Proton donor/acceptor role is filled by His-118. The Schiff-base intermediate with substrate role is filled by Lys-143. 3-dehydroquinate is bound by residues Arg-186, Thr-205, and Gln-209.

Belongs to the type-I 3-dehydroquinase family. In terms of assembly, homodimer.

It carries out the reaction 3-dehydroquinate = 3-dehydroshikimate + H2O. It participates in metabolic intermediate biosynthesis; chorismate biosynthesis; chorismate from D-erythrose 4-phosphate and phosphoenolpyruvate: step 3/7. Involved in the third step of the chorismate pathway, which leads to the biosynthesis of aromatic amino acids. Catalyzes the cis-dehydration of 3-dehydroquinate (DHQ) and introduces the first double bond of the aromatic ring to yield 3-dehydroshikimate. In Streptococcus gordonii (strain Challis / ATCC 35105 / BCRC 15272 / CH1 / DL1 / V288), this protein is 3-dehydroquinate dehydratase.